A 456-amino-acid polypeptide reads, in one-letter code: Serine--tRNA ligase (456 aa).

The segment at 49 to 69 (HERNEVSSTIGELKQAGEEEA) is disordered. 241 to 243 (TAE) serves as a coordination point for L-serine. ATP is bound by residues 272–274 (RQE) and V288. Residue E295 participates in L-serine binding. Residue 368-371 (EVSS) coordinates ATP. L-serine is bound at residue S404.

The protein belongs to the class-II aminoacyl-tRNA synthetase family. Type-1 seryl-tRNA synthetase subfamily. As to quaternary structure, homodimer. The tRNA molecule binds across the dimer.

It localises to the cytoplasm. It carries out the reaction tRNA(Ser) + L-serine + ATP = L-seryl-tRNA(Ser) + AMP + diphosphate + H(+). The enzyme catalyses tRNA(Sec) + L-serine + ATP = L-seryl-tRNA(Sec) + AMP + diphosphate + H(+). It functions in the pathway aminoacyl-tRNA biosynthesis; selenocysteinyl-tRNA(Sec) biosynthesis; L-seryl-tRNA(Sec) from L-serine and tRNA(Sec): step 1/1. Its function is as follows. Catalyzes the attachment of serine to tRNA(Ser). Is also able to aminoacylate tRNA(Sec) with serine, to form the misacylated tRNA L-seryl-tRNA(Sec), which will be further converted into selenocysteinyl-tRNA(Sec). The protein is Serine--tRNA ligase of Halorubrum lacusprofundi (strain ATCC 49239 / DSM 5036 / JCM 8891 / ACAM 34).